Consider the following 116-residue polypeptide: Large ribosomal subunit protein uL18 (116 aa).

This sequence belongs to the universal ribosomal protein uL18 family. In terms of assembly, part of the 50S ribosomal subunit; part of the 5S rRNA/L5/L18/L25 subcomplex. Contacts the 5S and 23S rRNAs.

Its function is as follows. This is one of the proteins that bind and probably mediate the attachment of the 5S RNA into the large ribosomal subunit, where it forms part of the central protuberance. This chain is Large ribosomal subunit protein uL18, found in Pseudomonas fluorescens (strain ATCC BAA-477 / NRRL B-23932 / Pf-5).